Reading from the N-terminus, the 73-residue chain is MPKIYRIKGKIVGKDEPMVFTKEYKAMKEEDAIEKIYSEIGSKHNVKRASIKIIEVSEISADEVQDPILQAVL.

This sequence belongs to the eukaryotic ribosomal protein eL20 family. In terms of assembly, part of the 50S ribosomal subunit. Binds 23S rRNA.

This is Large ribosomal subunit protein eL20 from Methanococcus aeolicus (strain ATCC BAA-1280 / DSM 17508 / OCM 812 / Nankai-3).